The following is a 215-amino-acid chain: S-crystallin 2 (215 aa).

Positions 2–80 (PSYTLNYFNH…YLAREFGFHG (79 aa)) constitute a GST N-terminal domain. Positions 82 to 215 (NNMEMARVEY…YLKKRSSTEF (134 aa)) constitute a GST C-terminal domain.

It belongs to the GST superfamily. As to expression, lens.

In terms of biological role, S-crystallins are structural components of squids and octopi eye lens. Contains relatively little if any GST activity. The chain is S-crystallin 2 from Enteroctopus dofleini (North Pacific giant octopus).